A 255-amino-acid polypeptide reads, in one-letter code: Fe(3+) dicitrate transport ATP-binding protein FecE (255 aa).

Residues 3-238 (LRTENLTVSY…GLLRTVFSVE (236 aa)) enclose the ABC transporter domain. Residue 35 to 42 (GPNGCGKS) coordinates ATP.

Belongs to the ABC transporter superfamily. In terms of assembly, the complex is composed of two ATP-binding proteins (FecE), two transmembrane proteins (FecC and FecD) and a solute-binding protein (FecB).

Its subcellular location is the cell inner membrane. The enzyme catalyses iron(III) dicitrate(out) + ATP + H2O = iron(III) dicitrate(in) + ADP + phosphate + H(+). Part of the ABC transporter complex FecBCDE involved in citrate-dependent Fe(3+) uptake. Binds ATP. Probably responsible for energy coupling to the transport system. The sequence is that of Fe(3+) dicitrate transport ATP-binding protein FecE from Escherichia coli (strain K12).